Reading from the N-terminus, the 179-residue chain is Zinc finger HIT domain-containing protein 3 (179 aa).

Positions 11, 14, 22, 25, 30, 34, 38, and 49 each coordinate Zn(2+). The segment at 11–49 (CVVCLEKPKYRCPACRVPYCSLPCFRKHKAPPLQQLPVC) adopts an HIT-type zinc-finger fold. S104 carries the post-translational modification Phosphoserine.

As to quaternary structure, thyroid receptor interacting proteins (TRIPs) specifically interact with the ligand binding domain of the thyroid receptor (TR). Requires the presence of thyroid hormone for its interaction. Interacts with NUFIP1. Interacts (via HIT-type zinc finger) with the RUVBL1/RUVBL2 complex in the presence of ADP.

It is found in the cytoplasm. The protein resides in the nucleus. This chain is Zinc finger HIT domain-containing protein 3 (ZNHIT3), found in Bos taurus (Bovine).